We begin with the raw amino-acid sequence, 255 residues long: F-box/SPRY domain-containing protein 1 (255 aa).

Residues 3-51 form the F-box domain; it reads DPVAALCNYNVLEVIFSYLELDDLSHCSQVCKSWYHFLNDENSDVWRWH. The B30.2/SPRY domain maps to 61 to 253; it reads LKSDLLSSVP…VSMVYLGTPL (193 aa).

It belongs to the FBXO45/Fsn family. In terms of assembly, component of an E3 ubiquitin ligase complex composed of hiw and Fsn.

It localises to the synapse. It functions in the pathway protein modification; protein ubiquitination. Functionally, required in the presynaptic motoneuron to down-regulate the levels of wnd and restrain synaptic terminal growth at the neuromuscular junction (NMJ). The protein is F-box/SPRY domain-containing protein 1 of Drosophila sechellia (Fruit fly).